The chain runs to 146 residues: Ribonuclease H (146 aa).

One can recognise an RNase H type-1 domain in the interval 1–143; it reads MEKTITIYTD…CDELARLAIK (143 aa). Residues aspartate 10, glutamate 48, aspartate 70, and aspartate 135 each contribute to the Mg(2+) site.

This sequence belongs to the RNase H family. As to quaternary structure, monomer. It depends on Mg(2+) as a cofactor.

The protein localises to the cytoplasm. The enzyme catalyses Endonucleolytic cleavage to 5'-phosphomonoester.. Endonuclease that specifically degrades the RNA of RNA-DNA hybrids. In Chlorobaculum parvum (strain DSM 263 / NCIMB 8327) (Chlorobium vibrioforme subsp. thiosulfatophilum), this protein is Ribonuclease H.